Reading from the N-terminus, the 456-residue chain is Bifunctional protein GlmU (456 aa).

The tract at residues 1–229 (MYKSAVILAA…PDEIKGVNSR (229 aa)) is pyrophosphorylase. UDP-N-acetyl-alpha-D-glucosamine is bound by residues 8–11 (LAAG), Lys-22, Gln-73, and 78–79 (GT). Asp-103 is a binding site for Mg(2+). Gly-140, Glu-155, Asn-170, and Asn-227 together coordinate UDP-N-acetyl-alpha-D-glucosamine. Residue Asn-227 coordinates Mg(2+). A linker region spans residues 230–250 (GQLAEAEEILRLRINERHMEN). The interval 251–456 (GVTLIDPKNT…GWVAKKGLKK (206 aa)) is N-acetyltransferase. Residues Arg-332 and Lys-350 each coordinate UDP-N-acetyl-alpha-D-glucosamine. The active-site Proton acceptor is the His-362. 2 residues coordinate UDP-N-acetyl-alpha-D-glucosamine: Tyr-365 and Asn-376. Residues 385–386 (NY), Ala-422, and Arg-439 contribute to the acetyl-CoA site.

This sequence in the N-terminal section; belongs to the N-acetylglucosamine-1-phosphate uridyltransferase family. In the C-terminal section; belongs to the transferase hexapeptide repeat family. Homotrimer. It depends on Mg(2+) as a cofactor.

It is found in the cytoplasm. It carries out the reaction alpha-D-glucosamine 1-phosphate + acetyl-CoA = N-acetyl-alpha-D-glucosamine 1-phosphate + CoA + H(+). The enzyme catalyses N-acetyl-alpha-D-glucosamine 1-phosphate + UTP + H(+) = UDP-N-acetyl-alpha-D-glucosamine + diphosphate. It functions in the pathway nucleotide-sugar biosynthesis; UDP-N-acetyl-alpha-D-glucosamine biosynthesis; N-acetyl-alpha-D-glucosamine 1-phosphate from alpha-D-glucosamine 6-phosphate (route II): step 2/2. The protein operates within nucleotide-sugar biosynthesis; UDP-N-acetyl-alpha-D-glucosamine biosynthesis; UDP-N-acetyl-alpha-D-glucosamine from N-acetyl-alpha-D-glucosamine 1-phosphate: step 1/1. Its pathway is bacterial outer membrane biogenesis; LPS lipid A biosynthesis. Its function is as follows. Catalyzes the last two sequential reactions in the de novo biosynthetic pathway for UDP-N-acetylglucosamine (UDP-GlcNAc). The C-terminal domain catalyzes the transfer of acetyl group from acetyl coenzyme A to glucosamine-1-phosphate (GlcN-1-P) to produce N-acetylglucosamine-1-phosphate (GlcNAc-1-P), which is converted into UDP-GlcNAc by the transfer of uridine 5-monophosphate (from uridine 5-triphosphate), a reaction catalyzed by the N-terminal domain. This chain is Bifunctional protein GlmU, found in Clostridium novyi (strain NT).